Reading from the N-terminus, the 469-residue chain is 3-isopropylmalate dehydratase large subunit (469 aa).

[4Fe-4S] cluster contacts are provided by Cys347, Cys410, and Cys413.

The protein belongs to the aconitase/IPM isomerase family. LeuC type 1 subfamily. As to quaternary structure, heterodimer of LeuC and LeuD. Requires [4Fe-4S] cluster as cofactor.

The enzyme catalyses (2R,3S)-3-isopropylmalate = (2S)-2-isopropylmalate. The protein operates within amino-acid biosynthesis; L-leucine biosynthesis; L-leucine from 3-methyl-2-oxobutanoate: step 2/4. In terms of biological role, catalyzes the isomerization between 2-isopropylmalate and 3-isopropylmalate, via the formation of 2-isopropylmaleate. The chain is 3-isopropylmalate dehydratase large subunit from Burkholderia mallei (strain NCTC 10247).